The primary structure comprises 710 residues: MKVLLHLPALLASLTLLQTAASASDDPTAETDIIHDTVEEVKVWVNKAFLDSRDRLKMAMTTKIHSTRHLSDYLKHAKGRTRTAIRSGQVWEESLKKLSQFLTNVTGQGLDLTLLSWEAGCDPPAPTMTCNISSPYRTITGYCNNRKNPALGSANRALARWLPAEYEDGLSLPYGWTPGKMRNGFPLPQPREVSNQIAAYLNEEDVLDQKRSMLFMQWGQIVDHDMDFAPETEMGSDTYTKAQCDEHCIQGDNCFPIMFPPGDPKLKTQGKCMPFFRAGFVCPTPPYKSLAREQINALTSFLDASLVYSPEPSLANRLRNLSSPLGLMAVNEEVSDNGRPFPPFVKMKPSPCEVINATAGVPCFLAGDSRASEQILLATSHTLFIREHNRLATELSRLNPHWDRETLYQEARKIMGAFIQITTFRDYLPILLGDEMQKWIPPYQGYNESVDPRISNVFTFALRFGHLEIPSTVYRLDENYQPWGSESELPLHTVFFNTWRLVKDGGIDPLVRGLLAKNAKLMHQNKMMTGELRNKLFQPNHTIHGFDLASINIQRSRDHGQPGYNSWRAFCGLSQPKTLEELSAVMKNEVLAKKLMDLYGTPSNIDIWLGAVAEPLVHRGRVGPLLTCLLGQQFQRIRDGDRFWWENPGVFTEKQRESLQKMSFSRLVCDNTGIDKVPLNPFQANAYPHGFVDCSSIDKLDLSPWASVKE.

Residues 1–23 form the signal peptide; sequence MKVLLHLPALLASLTLLQTAASA. Positions 24-80 are excised as a propeptide; that stretch reads SDDPTAETDIIHDTVEEVKVWVNKAFLDSRDRLKMAMTTKIHSTRHLSDYLKHAKGR. C130 and C143 are joined by a disulfide. Position 223 (D223) interacts with heme b. The active-site Proton acceptor is H224. Residue D225 coordinates Ca(2+). 2 disulfides stabilise this stretch: C244/C254 and C248/C272. Residues T299, F301, D303, and S305 each coordinate Ca(2+). At S313 the chain carries Phosphoserine. C352 and C363 are joined by a disulfide. E373 and H466 together coordinate heme b. Position 480 is a 3'-nitrotyrosine (Y480). Disulfide bonds link C571–C628 and C669–C694.

Belongs to the peroxidase family. The cofactor is Ca(2+). Heme b is required as a cofactor. Expressed in the colon, including colonocytes and mucin-containing goblet cells. Not detected in the ileum.

The protein localises to the secreted. It localises to the cytoplasm. It catalyses the reaction 2 a phenolic donor + H2O2 = 2 a phenolic radical donor + 2 H2O. It carries out the reaction thiocyanate + H2O2 + H(+) = hypothiocyanous acid + H2O. The catalysed reaction is iodide + H2O2 = hypoiodite + H2O. Heme-containing oxidoreductase which catalyzes the conversion of thiocyanate (SCN(-)) into antimicrobial agent hypothiocyanous acid (OSCN(-)) in the presence of hydrogen peroxide (H2O2). Also involved in the conversion of iodide (I(-)) into hypoiodite (IO(-)) in the presence of H2O2. Responsible for the inactivation of a wide range of micro-organisms and hence, important component of defense mechanism. May be implicated in airway host defense against infection. May contribute to maintaining an appropriate H2O2 cellular level, therefore protecting cells from H2O2-caused injuries and inflammation. This Mus musculus (Mouse) protein is Lactoperoxidase.